Reading from the N-terminus, the 95-residue chain is Small ribosomal subunit protein bS6 (95 aa).

This sequence belongs to the bacterial ribosomal protein bS6 family.

Its function is as follows. Binds together with bS18 to 16S ribosomal RNA. This chain is Small ribosomal subunit protein bS6, found in Corynebacterium urealyticum (strain ATCC 43042 / DSM 7109).